The following is a 447-amino-acid chain: ATP-dependent protease ATPase subunit HslU (447 aa).

Residues I18, 60–65, D259, E325, and R397 contribute to the ATP site; that span reads GVGKTE.

It belongs to the ClpX chaperone family. HslU subfamily. As to quaternary structure, a double ring-shaped homohexamer of HslV is capped on each side by a ring-shaped HslU homohexamer. The assembly of the HslU/HslV complex is dependent on binding of ATP.

Its subcellular location is the cytoplasm. Its function is as follows. ATPase subunit of a proteasome-like degradation complex; this subunit has chaperone activity. The binding of ATP and its subsequent hydrolysis by HslU are essential for unfolding of protein substrates subsequently hydrolyzed by HslV. HslU recognizes the N-terminal part of its protein substrates and unfolds these before they are guided to HslV for hydrolysis. In Burkholderia lata (strain ATCC 17760 / DSM 23089 / LMG 22485 / NCIMB 9086 / R18194 / 383), this protein is ATP-dependent protease ATPase subunit HslU.